A 687-amino-acid polypeptide reads, in one-letter code: Dictomallein (687 aa).

Disordered stretches follow at residues 1–45 and 73–112; these read MGNG…SRRL and TAGGAAPLTPAVASPAGPTGSTPGSTPGATTAPAPSSTSA. Positions 233 to 501 constitute a Peptidase M66 domain; the sequence is PVFGTDADVQ…QAWIASRVLA (269 aa). Position 393 (His-393) interacts with Zn(2+). Glu-394 is a catalytic residue. Residues His-397 and His-403 each contribute to the Zn(2+) site.

The protein belongs to the dictomallein family. The cofactor is Zn(2+).

The polypeptide is Dictomallein (dtmL) (Burkholderia pseudomallei (strain 668)).